The primary structure comprises 209 residues: Ras-like protein (209 aa).

15–22 provides a ligand contact to GTP; sequence GGGGEGKS. The Effector region motif lies at 37-45; that stretch reads YDPTIEESY. Residues 62–66 and 121–124 each bind GTP; these read DTAGQ and NKCD. S-palmitoyl cysteine attachment occurs at residues Cys202 and Cys203. The residue at position 206 (Cys206) is a Cysteine methyl ester. Cys206 carries the S-geranylgeranyl cysteine lipid modification. The propeptide at 207 to 209 is removed in mature form; that stretch reads IVM.

This sequence belongs to the small GTPase superfamily. Ras family.

The protein localises to the cell membrane. The enzyme catalyses GTP + H2O = GDP + phosphate + H(+). Its activity is regulated as follows. Alternates between an inactive form bound to GDP and an active form bound to GTP. Activated by a guanine nucleotide-exchange factor (GEF) and inactivated by a GTPase-activating protein (GAP). The sequence is that of Ras-like protein from Laccaria bicolor (Bicoloured deceiver).